The following is a 233-amino-acid chain: Hydroxyacylglutathione hydrolase (233 aa).

Positions 52, 54, 56, 57, 108, 125, and 163 each coordinate Zn(2+).

This sequence belongs to the metallo-beta-lactamase superfamily. Glyoxalase II family. Monomer. The cofactor is Zn(2+).

The enzyme catalyses an S-(2-hydroxyacyl)glutathione + H2O = a 2-hydroxy carboxylate + glutathione + H(+). Its pathway is secondary metabolite metabolism; methylglyoxal degradation; (R)-lactate from methylglyoxal: step 2/2. In terms of biological role, thiolesterase that catalyzes the hydrolysis of S-D-lactoyl-glutathione to form glutathione and D-lactic acid. The sequence is that of Hydroxyacylglutathione hydrolase from Histophilus somni (strain 2336) (Haemophilus somnus).